A 167-amino-acid polypeptide reads, in one-letter code: Phosphopantetheine adenylyltransferase (167 aa).

Residue S11 coordinates substrate. ATP is bound by residues 11-12 (SF) and H19. Substrate contacts are provided by K43, T76, and R90. ATP-binding positions include 91-93 (GIR), E101, and 126-132 (YDALSST).

This sequence belongs to the bacterial CoaD family. As to quaternary structure, homohexamer. Mg(2+) serves as cofactor.

The protein resides in the cytoplasm. It carries out the reaction (R)-4'-phosphopantetheine + ATP + H(+) = 3'-dephospho-CoA + diphosphate. It functions in the pathway cofactor biosynthesis; coenzyme A biosynthesis; CoA from (R)-pantothenate: step 4/5. Its function is as follows. Reversibly transfers an adenylyl group from ATP to 4'-phosphopantetheine, yielding dephospho-CoA (dPCoA) and pyrophosphate. The sequence is that of Phosphopantetheine adenylyltransferase from Lacticaseibacillus casei (strain BL23) (Lactobacillus casei).